A 172-amino-acid chain; its full sequence is Adenine phosphoribosyltransferase (172 aa).

It belongs to the purine/pyrimidine phosphoribosyltransferase family. As to quaternary structure, homodimer.

It localises to the cytoplasm. The catalysed reaction is AMP + diphosphate = 5-phospho-alpha-D-ribose 1-diphosphate + adenine. It functions in the pathway purine metabolism; AMP biosynthesis via salvage pathway; AMP from adenine: step 1/1. In terms of biological role, catalyzes a salvage reaction resulting in the formation of AMP, that is energically less costly than de novo synthesis. In Prochlorococcus marinus (strain NATL1A), this protein is Adenine phosphoribosyltransferase.